The chain runs to 122 residues: MARIAGVNIPTAKRVVIALTYIHGIGTKFAQEIIEKVGIPAERRVHQLTDAEVLQIRETIDRDYQVEGDLRRETSMNIKRLMDLGCYRGLRHRRGLPVRGQRTHTNARTRKGPAKAIAGKKK.

The interval 99-122 is disordered; sequence RGQRTHTNARTRKGPAKAIAGKKK.

It belongs to the universal ribosomal protein uS13 family. In terms of assembly, part of the 30S ribosomal subunit. Forms a loose heterodimer with protein S19. Forms two bridges to the 50S subunit in the 70S ribosome.

Located at the top of the head of the 30S subunit, it contacts several helices of the 16S rRNA. In the 70S ribosome it contacts the 23S rRNA (bridge B1a) and protein L5 of the 50S subunit (bridge B1b), connecting the 2 subunits; these bridges are implicated in subunit movement. Contacts the tRNAs in the A and P-sites. The chain is Small ribosomal subunit protein uS13 from Rhizobium meliloti (strain 1021) (Ensifer meliloti).